A 240-amino-acid polypeptide reads, in one-letter code: Proline-rich antigen homolog (240 aa).

Pro residues-rich tracts occupy residues 1 to 31 (MTEQ…PAAP) and 38 to 78 (APPP…PPGP). Residues 1-78 (MTEQPPPGGS…GGYAPPPPGP (78 aa)) form a disordered region. One can recognise an RDD domain in the interval 89-233 (TPWITRVLAA…KRQTLADKIM (145 aa)). 3 helical membrane-spanning segments follow: residues 98 to 118 (AFID…IMLV), 142 to 162 (SMIG…YLVW), and 203 to 223 (LAHF…LWDA).

This sequence belongs to the mycobacterial Pra family.

The protein localises to the cell membrane. In Mycobacterium tuberculosis (strain CDC 1551 / Oshkosh), this protein is Proline-rich antigen homolog.